Here is a 387-residue protein sequence, read N- to C-terminus: Putative gustatory receptor 22d (387 aa).

Residues 1-43 lie on the Cytoplasmic side of the membrane; the sequence is MFRPRCGLRQKFVYVILKSILYSSWLLGIFPFKYEPKKRRLRR. Residues 44–64 traverse the membrane as a helical segment; it reads SMWLILFGVVISSSLLILMVK. The Extracellular portion of the chain corresponds to 65–82; the sequence is QSAEDREHGIMLDVFQRN. The chain crosses the membrane as a helical span at residues 83–103; sequence ALLYQISSLMGVVGVVSICTV. At 104–142 the chain is on the cytoplasmic side; that stretch reads HLRTLWRSKHLEEIYNGLMLLEAKYFCSNAVECPAFDGY. Residues 143–163 form a helical membrane-spanning segment; the sequence is VIQKGVVIVVGLLAPWMVHFG. Topologically, residues 164–184 are extracellular; the sequence is MPDSKLPVLNVLVVSMVKLGT. The helical transmembrane segment at 185 to 205 threads the bilayer; the sequence is LLLALHYHLGVVIIYRFVWLI. Over 206 to 252 the chain is Cytoplasmic; that stretch reads NRELLSLVCSLRGNHKGSSSRVRFLLKLYNKLVNLYSKLADCYDCQT. Residues 253–273 form a helical membrane-spanning segment; the sequence is VLMMAIFLAANIIVCFYMIVY. Over 274-281 the chain is Extracellular; it reads RISLSKMS. Residues 282 to 302 form a helical membrane-spanning segment; the sequence is FFVMLIMFPLAIANNFMDFWL. Residues 303–363 lie on the Cytoplasmic side of the membrane; sequence SMKVCDLLQK…HCGLFHVNRE (61 aa). The chain crosses the membrane as a helical span at residues 364-384; the sequence is MGFKMFVASVLYLLYLVQFDY. At 385–387 the chain is on the extracellular side; sequence MNL.

Belongs to the insect chemoreceptor superfamily. Gustatory receptor (GR) family. Gr22e subfamily. As to expression, expressed in neurons of the dorsal pharyngeal sense organs of larvae.

Its subcellular location is the cell membrane. Its function is as follows. Probable gustatory receptor which mediates acceptance or avoidance behavior, depending on its substrates. The polypeptide is Putative gustatory receptor 22d (Drosophila melanogaster (Fruit fly)).